The following is a 129-amino-acid chain: Glycine cleavage system H protein (129 aa).

One can recognise a Lipoyl-binding domain in the interval 24–106 (EAVVGITEHA…YGAGWLFRIK (83 aa)). Lys-65 bears the N6-lipoyllysine mark.

Belongs to the GcvH family. The glycine cleavage system is composed of four proteins: P, T, L and H. (R)-lipoate is required as a cofactor.

In terms of biological role, the glycine cleavage system catalyzes the degradation of glycine. The H protein shuttles the methylamine group of glycine from the P protein to the T protein. The polypeptide is Glycine cleavage system H protein (Aeromonas salmonicida (strain A449)).